The chain runs to 294 residues: MSLKRSDDYQDLEEGIAMEDGGNIKDEEEKPLDPIEEQNKKRWVLIRAVLGELLCTFLFVYVLCATSANFIRLGSPPNPVVGGLSTGFAAVALIYSFADVSGAHFNPAVTFATCVTRKTSITKGLMYVGAQLVGSVLASLILLATFPGNFPGDKNAASAVAIAPSTDANIGNAFLTELVLTFILVYVIFAVAFDTVDNSVKTKVVGKSSSNNLTIYTTSGQTKAGFAPIAIGFTLGFLCFLGGSVSGGAFNPARVFGTALVGNNWTRHWMYWIADFLGAGLAGFAQKFFSSTHK.

The segment at 1–31 (MSLKRSDDYQDLEEGIAMEDGGNIKDEEEKP) is disordered. Over 1-42 (MSLKRSDDYQDLEEGIAMEDGGNIKDEEEKPLDPIEEQNKKR) the chain is Cytoplasmic. Residues 22–31 (GNIKDEEEKP) are compositionally biased toward basic and acidic residues. Residues 43-63 (WVLIRAVLGELLCTFLFVYVL) form a helical membrane-spanning segment. The Extracellular portion of the chain corresponds to 64–79 (CATSANFIRLGSPPNP). A glycan (O-linked (GalNAc...) serine) is linked at Ser-75. A helical transmembrane segment spans residues 80–100 (VVGGLSTGFAAVALIYSFADV). Topologically, residues 101–123 (SGAHFNPAVTFATCVTRKTSITK) are cytoplasmic. Positions 106–108 (NPA) match the NPA 1 motif. The chain crosses the membrane as a helical span at residues 124 to 144 (GLMYVGAQLVGSVLASLILLA). The Extracellular segment spans residues 145–172 (TFPGNFPGDKNAASAVAIAPSTDANIGN). The chain crosses the membrane as a helical span at residues 173 to 193 (AFLTELVLTFILVYVIFAVAF). Over 194–224 (DTVDNSVKTKVVGKSSSNNLTIYTTSGQTKA) the chain is Cytoplasmic. Residues 208–219 (SSSNNLTIYTTS) are required for water permeability. A helical membrane pass occupies residues 225–245 (GFAPIAIGFTLGFLCFLGGSV). The Extracellular portion of the chain corresponds to 246–268 (SGGAFNPARVFGTALVGNNWTRH). Residues 251 to 253 (NPA) carry the NPA 2 motif. The helical transmembrane segment at 269 to 289 (WMYWIADFLGAGLAGFAQKFF) threads the bilayer. Residues 290 to 294 (SSTHK) lie on the Cytoplasmic side of the membrane.

This sequence belongs to the MIP/aquaporin (TC 1.A.8) family. Glycosylated and non-glycosylated forms exist throughout all developmental stages.

It is found in the cell membrane. Its subcellular location is the cytoplasmic vesicle. Putatively gated water-specific channel, requiring a cysteine residue within the channel. Impermeable to water, glycerol and urea when expressed in Xenopus oocytes. Not regulated by pH; channels remain impermeable to water at pH 7.4 and 5.2. This is Aquaporin-B from Dictyostelium discoideum (Social amoeba).